The following is a 414-amino-acid chain: MYNRNILIEQTDPEIFAAIAAENARQEQHIELIASENYASPAVMAAQGTQLTNKYAEGYPGKRYYGGCEFVDIAEQLAIDRVKQIFGADAANVQPHCGASANEAVFLAFLKPGDTIMGMSLAEGGHLTHGMALNMSGKWFNVVSYGLNDKEEIDYDAMERKAHESKPKLIIAGASAYSLRIDFARFAKVAKDVGAIFMVDMAHYAGLIAAGIYPNPVPHADVVTSTTHKSLRGPRGGIILMKAQHEKAINSAIFPGLQGGPLMHVIAAKAVAFKEALQPEFKVYQQQVLTNARVVAETLVSRGLRIVSGRTESHVMLVDLRSKSITGKEAEAVLGSAHMTINKNAIPNDPEKPMVTSGVRIGTPAMTTRGFKDEEARITANLIADVLDNPRDSANIDAVRAKVNALTKRFPVYG.

Residues Leu-121 and 125-127 (GHL) each bind (6S)-5,6,7,8-tetrahydrofolate. N6-(pyridoxal phosphate)lysine is present on Lys-229.

It belongs to the SHMT family. As to quaternary structure, homodimer. It depends on pyridoxal 5'-phosphate as a cofactor.

Its subcellular location is the cytoplasm. It catalyses the reaction (6R)-5,10-methylene-5,6,7,8-tetrahydrofolate + glycine + H2O = (6S)-5,6,7,8-tetrahydrofolate + L-serine. Its pathway is one-carbon metabolism; tetrahydrofolate interconversion. It participates in amino-acid biosynthesis; glycine biosynthesis; glycine from L-serine: step 1/1. Its function is as follows. Catalyzes the reversible interconversion of serine and glycine with tetrahydrofolate (THF) serving as the one-carbon carrier. This reaction serves as the major source of one-carbon groups required for the biosynthesis of purines, thymidylate, methionine, and other important biomolecules. Also exhibits THF-independent aldolase activity toward beta-hydroxyamino acids, producing glycine and aldehydes, via a retro-aldol mechanism. The protein is Serine hydroxymethyltransferase of Albidiferax ferrireducens (strain ATCC BAA-621 / DSM 15236 / T118) (Rhodoferax ferrireducens).